Here is a 408-residue protein sequence, read N- to C-terminus: Potassium channel subfamily K member 13 (408 aa).

Over Met-1–Arg-19 the chain is Cytoplasmic. Residues Phe-20–Ala-40 form a helical membrane-spanning segment. N-linked (GlcNAc...) asparagine glycosylation is found at Asn-59 and Asn-65. Positions Trp-95 to Met-115 form an intramembrane region, pore-forming. Residues Thr-110, Ile-111, and Gly-112 each contribute to the K(+) site. Residues Thr-110–Met-115 are selectivity filter 1. The chain crosses the membrane as a helical span at residues Ile-125 to Phe-145. Residues Leu-146–Ser-193 lie on the Cytoplasmic side of the membrane. The chain crosses the membrane as a helical span at residues Val-194 to Ala-214. Residues Tyr-224–Val-244 constitute an intramembrane region (pore-forming). K(+) contacts are provided by Thr-237, Ile-238, Gly-239, and Phe-240. The tract at residues Thr-237–Asp-242 is selectivity filter 2. The chain crosses the membrane as a helical span at residues Val-263–Ile-283. Over Lys-284–Arg-408 the chain is Cytoplasmic.

Belongs to the two pore domain potassium channel (TC 1.A.1.8) family. As to quaternary structure, homodimer. Heterodimer with KCNK12. Expressed in microglia (at protein level).

The protein localises to the cell membrane. It catalyses the reaction K(+)(in) = K(+)(out). Its activity is regulated as follows. The channel conductance is activated by arachidonic acid and inhibited by Ba(2+) ions, volatile anesthetics such as halothane and antiarrhythmic drugs mexiletine and lidocaine. Insensitive to extracellular pH change. K(+) channel that conducts outward rectifying tonic currents potentiated by purinergic signals. Homo- and heterodimerizes to form functional channels with distinct regulatory and gating properties. Contributes most of K(+) currents at the plasma membrane of resting microglia. Maintains a depolarized membrane potential required for proper ramified microglia morphology and phagocytosis, selectively mediating microglial pruning of presynaptic compartments at hippocampal excitatory synapses. Upon local release of ATP caused by neuronal injury or infection, it is potentiated by P2RY12 and P2RX7 receptor signaling and contributes to ATP-triggered K(+) efflux underlying microglial NLRP3 inflammasome assembly and IL1B release. This chain is Potassium channel subfamily K member 13, found in Homo sapiens (Human).